We begin with the raw amino-acid sequence, 222 residues long: WAP four-disulfide core domain protein 1 (222 aa).

Positions 1–32 (MDSRMLSDQRFCRRIFAAALCVLVLLADSGCA) are cleaved as a signal peptide. The 50-residue stretch at 61 to 110 (HYQKNDRCPPPPQTLPDRACEVPSCRSDSECERHKRCCYNGCIYACLESV) folds into the WAP domain. Intrachain disulfides connect cysteine 68–cysteine 98, cysteine 80–cysteine 102, cysteine 85–cysteine 97, and cysteine 91–cysteine 106.

It localises to the secreted. Its function is as follows. Has growth inhibitory activity. In Gallus gallus (Chicken), this protein is WAP four-disulfide core domain protein 1 (WFDC1).